A 523-amino-acid polypeptide reads, in one-letter code: MACVSTCLILSPRLTQVGLSSKKPFLIRLRSPVDRYSFPRMLTERCLSTRRKFNRHGIAVVKAASLDKVSGAIKPGGLVESDKLPTDVRKRAMDAVDECGRRVTVGDVASRGGLKVTEAQTALQAIAADTDGFLEVSDEGDVLYVFPRDYRTKLAAKSLRIQIEPFLEKAKGAVDYLARVSFGTALIASIVIVYTSIIALLSSKSEDDNRQRRRGRSYDSGFNFYINPVDLLWYWDPNYYNRRRAREDEGKGMNFIESVFSFVFGDGDPNQGIEEERWQMIGQYITSRGGVVAADELAPYLDVPSSKSAMNDESYILPVLLRFDGQPELDEEGNILYCFPSLQRTASGSSRRKEYVGKWFDWVADMEKFFKEKKWQFSKTSTSERALVIGLGAVNLFGVIVLNTLLNEMSVRPGGFLTFVKNIYPLLQIYAGSFFTIPLIRWFSIKRKNNQIENRNKARLQFARALESPDIALRRKLLSARDMAQKTVIGKDRIVYSTDRDMMEQNYETDEWDRRFKELEKSD.

The N-terminal 63 residues, 1–63 (MACVSTCLIL…NRHGIAVVKA (63 aa)), are a transit peptide targeting the chloroplast. A run of 3 helical transmembrane segments spans residues 180–200 (VSFG…IIAL), 386–406 (ALVI…NTLL), and 423–443 (IYPL…IRWF).

The protein resides in the plastid. The protein localises to the chloroplast membrane. This is an uncharacterized protein from Arabidopsis thaliana (Mouse-ear cress).